The primary structure comprises 447 residues: Chromosomal replication initiator protein DnaA (447 aa).

The domain I, interacts with DnaA modulators stretch occupies residues 1–74; that stretch reads MENIEELWSA…MLLEVTGSEL (74 aa). Residues 74–108 are domain II; it reads LNTKFIIPDSLEEIEEQKPMPKPKQSTDTGDSPKS. The tract at residues 85–107 is disordered; that stretch reads EEIEEQKPMPKPKQSTDTGDSPK. The segment covering 97–107 has biased composition (polar residues); it reads KQSTDTGDSPK. A domain III, AAA+ region region spans residues 109–325; it reads MLNSKYTFDT…GALIRVVAYS (217 aa). ATP-binding residues include G153, G155, K156, and T157. The interval 326–447 is domain IV, binds dsDNA; the sequence is SLVNQDIDAS…EELKEKLKSI (122 aa).

Belongs to the DnaA family. As to quaternary structure, oligomerizes as a right-handed, spiral filament on DNA at oriC.

It localises to the cytoplasm. Functionally, plays an essential role in the initiation and regulation of chromosomal replication. ATP-DnaA binds to the origin of replication (oriC) to initiate formation of the DNA replication initiation complex once per cell cycle. Binds the DnaA box (a 9 base pair repeat at the origin) and separates the double-stranded (ds)DNA. Forms a right-handed helical filament on oriC DNA; dsDNA binds to the exterior of the filament while single-stranded (ss)DNA is stabiized in the filament's interior. The ATP-DnaA-oriC complex binds and stabilizes one strand of the AT-rich DNA unwinding element (DUE), permitting loading of DNA polymerase. After initiation quickly degrades to an ADP-DnaA complex that is not apt for DNA replication. Binds acidic phospholipids. The polypeptide is Chromosomal replication initiator protein DnaA (Oceanobacillus iheyensis (strain DSM 14371 / CIP 107618 / JCM 11309 / KCTC 3954 / HTE831)).